A 214-amino-acid chain; its full sequence is Exosome complex component RRP46 homolog (214 aa).

This sequence belongs to the RNase PH family. Homodimer. Component of the RNA exosome complex. Interacts with crn-4; interaction promotes the DNase activity of crn-4. Interacts with crn-3, cps-6 and cyn-13.

The protein resides in the cytoplasm. Its subcellular location is the nucleus. Non-catalytic component of the RNA exosome complex which has 3'-&gt;5' exoribonuclease activity and participates in a multitude of cellular RNA processing and degradation events. Involved in apoptotic DNA degradation. In vitro, does not bind or digest single-stranded RNA. In vitro, binds to double-stranded DNA without detectable DNase activity. This chain is Exosome complex component RRP46 homolog, found in Caenorhabditis elegans.